The primary structure comprises 259 residues: DnaJ homolog subfamily C member 9 (259 aa).

Residues 15-82 (DLYQVLGVRR…EQKAVYDEQG (68 aa)) form the J domain. At Ser-109 the chain carries Phosphoserine. Residues 171–248 (EIPAYSAFVK…EAKYCKPSKG (78 aa)) are required for histone binding.

In terms of assembly, forms a co-chaperone complex with MCM2 and histone H3.3-H4 dimers. Within the complex, interacts (via C-terminus) with MCM2 (via N-terminus); the interaction is histone-dependent. Within the complex, interacts (via C-terminus) with histone H3.3-H4 heterodimers; the interaction is direct. Interacts with histones H4, H3.3, H3.2 and H3.1, but not with CENPA or the testis-specific histone H3.1t. Interacts (via J domain) with HSPA1A, HSPA1B and HSPA8. May interact with TONSL; the interaction seems to be histone-dependent. May interact with HSPA8 and BAG2; the interactions seem to be histone-dependent.

Its subcellular location is the nucleus. It localises to the cytoplasm. The protein resides in the cell membrane. Functionally, acts as a dual histone chaperone and heat shock co-chaperone. As a histone chaperone, forms a co-chaperone complex with MCM2 and histone H3-H4 heterodimers; and may thereby assist MCM2 in histone H3-H4 heterodimer recognition and facilitate the assembly of histones into nucleosomes. May also act as a histone co-chaperone together with TONSL. May recruit histone chaperones ASF1A, NASP and SPT2 to histone H3-H4 heterodimers. Also plays a role as co-chaperone of the HSP70 family of molecular chaperone proteins, such as HSPA1A, HSPA1B and HSPA8. As a co-chaperone, may play a role in the recruitment of HSP70-type molecular chaperone machinery to histone H3-H4 substrates, thereby maintaining the histone structural integrity. Exhibits activity to assemble histones onto DNA in vitro. This is DnaJ homolog subfamily C member 9 (Dnajc9) from Mus musculus (Mouse).